The chain runs to 235 residues: 2-C-methyl-D-erythritol 4-phosphate cytidylyltransferase (235 aa).

This sequence belongs to the IspD/TarI cytidylyltransferase family. IspD subfamily.

It carries out the reaction 2-C-methyl-D-erythritol 4-phosphate + CTP + H(+) = 4-CDP-2-C-methyl-D-erythritol + diphosphate. It functions in the pathway isoprenoid biosynthesis; isopentenyl diphosphate biosynthesis via DXP pathway; isopentenyl diphosphate from 1-deoxy-D-xylulose 5-phosphate: step 2/6. Functionally, catalyzes the formation of 4-diphosphocytidyl-2-C-methyl-D-erythritol from CTP and 2-C-methyl-D-erythritol 4-phosphate (MEP). The chain is 2-C-methyl-D-erythritol 4-phosphate cytidylyltransferase from Pseudomonas putida (strain ATCC 47054 / DSM 6125 / CFBP 8728 / NCIMB 11950 / KT2440).